A 379-amino-acid chain; its full sequence is Homoserine O-acetyltransferase (379 aa).

The region spanning 45–355 (NAILILHALT…PHGHDAFLIE (311 aa)) is the AB hydrolase-1 domain. Ser-151 functions as the Nucleophile in the catalytic mechanism. Arg-220 serves as a coordination point for substrate. Catalysis depends on residues Asp-316 and His-349. Asp-350 lines the substrate pocket.

This sequence belongs to the AB hydrolase superfamily. MetX family. In terms of assembly, homodimer.

Its subcellular location is the cytoplasm. It carries out the reaction L-homoserine + acetyl-CoA = O-acetyl-L-homoserine + CoA. Its pathway is amino-acid biosynthesis; L-methionine biosynthesis via de novo pathway; O-acetyl-L-homoserine from L-homoserine: step 1/1. Functionally, transfers an acetyl group from acetyl-CoA to L-homoserine, forming acetyl-L-homoserine. The polypeptide is Homoserine O-acetyltransferase (Carboxydothermus hydrogenoformans (strain ATCC BAA-161 / DSM 6008 / Z-2901)).